We begin with the raw amino-acid sequence, 80 residues long: Large ribosomal subunit protein bL31 (80 aa).

Zn(2+) is bound by residues Cys-16, Cys-18, Cys-38, and Cys-41.

The protein belongs to the bacterial ribosomal protein bL31 family. Type A subfamily. As to quaternary structure, part of the 50S ribosomal subunit. Requires Zn(2+) as cofactor.

In terms of biological role, binds the 23S rRNA. The chain is Large ribosomal subunit protein bL31 from Rhodococcus jostii (strain RHA1).